The chain runs to 288 residues: Homoserine kinase (288 aa).

Position 78–88 (proline 78–serine 88) interacts with ATP.

It belongs to the GHMP kinase family. Homoserine kinase subfamily.

Its subcellular location is the cytoplasm. The enzyme catalyses L-homoserine + ATP = O-phospho-L-homoserine + ADP + H(+). It functions in the pathway amino-acid biosynthesis; L-threonine biosynthesis; L-threonine from L-aspartate: step 4/5. Catalyzes the ATP-dependent phosphorylation of L-homoserine to L-homoserine phosphate. The chain is Homoserine kinase from Streptococcus agalactiae serotype III (strain NEM316).